Reading from the N-terminus, the 275-residue chain is Ribosomal RNA small subunit methyltransferase A (275 aa).

Positions 21, 23, 48, 69, 94, and 115 each coordinate S-adenosyl-L-methionine.

Belongs to the class I-like SAM-binding methyltransferase superfamily. rRNA adenine N(6)-methyltransferase family. RsmA subfamily.

It localises to the cytoplasm. It carries out the reaction adenosine(1518)/adenosine(1519) in 16S rRNA + 4 S-adenosyl-L-methionine = N(6)-dimethyladenosine(1518)/N(6)-dimethyladenosine(1519) in 16S rRNA + 4 S-adenosyl-L-homocysteine + 4 H(+). In terms of biological role, specifically dimethylates two adjacent adenosines (A1518 and A1519) in the loop of a conserved hairpin near the 3'-end of 16S rRNA in the 30S particle. May play a critical role in biogenesis of 30S subunits. This chain is Ribosomal RNA small subunit methyltransferase A, found in Clostridium botulinum (strain Okra / Type B1).